The sequence spans 88 residues: MARSLKKGPFVDESLFKKVTAAKDGEVIKTWSRRSTIFPEFIGKTFGVYNGKEFIPVYITEDMVGNKLGEFAPTRKFGGHGDDKGKKK.

Belongs to the universal ribosomal protein uS19 family.

Protein S19 forms a complex with S13 that binds strongly to the 16S ribosomal RNA. In Mycoplasma mycoides subsp. mycoides SC (strain CCUG 32753 / NCTC 10114 / PG1), this protein is Small ribosomal subunit protein uS19.